The sequence spans 545 residues: Tripartite motif-containing protein 26 (545 aa).

An RING-type zinc finger spans residues 16–57 (CSICLDYLRDPVTIDCGHVFCRSCTSDIRPISGNRPVCPLCK). Residues 97–138 (QDMKLCERHQEKLHYYCEDDGKLLCVMCRESREHRPHTAVLV) form a B box-type zinc finger. Zn(2+) contacts are provided by Cys102, His105, Cys124, and His130. Residues 197 to 243 (QFLKKREQHLLDQLATLEQLLTEGREKFKTRGVSELDRLTLVISELE) are a coiled coil. One can recognise a B30.2/SPRY domain in the interval 301 to 545 (RGLRQFQGKL…WPGARLLLRP (245 aa)). The interval 382–443 (REGWSEDEEE…EEEEEVQESC (62 aa)) is disordered. The span at 386-440 (SEDEEEGEEEEEGEEEEEDEEVGYGDGYEDWETDEEDESLGEEEEEEEEEEEEVQ) shows a compositional bias: acidic residues.

Belongs to the TRIM/RBCC family. As to quaternary structure, interacts with TBK1; this interaction bridges together TBK1 and NEMO in order to activate TBK1. Interacts with INCA1. Post-translationally, autoubiquitinates upon viral infection. In turn, autoubiquitinated TRIM26 recruits NEMO and bridges TBK1-NEMO interaction.

The protein localises to the cytoplasm. It localises to the nucleus. The enzyme catalyses S-ubiquitinyl-[E2 ubiquitin-conjugating enzyme]-L-cysteine + [acceptor protein]-L-lysine = [E2 ubiquitin-conjugating enzyme]-L-cysteine + N(6)-ubiquitinyl-[acceptor protein]-L-lysine.. Its function is as follows. E3 ubiquitin-protein ligase which regulates the IFN-beta production and antiviral response downstream of various DNA-encoded pattern-recognition receptors (PRRs). Also plays a central role in determining the response to different forms of oxidative stress by controlling levels of DNA glycosylases NEIL1, NEIL3 and NTH1 that are involved in repair of damaged DNA. Promotes nuclear IRF3 ubiquitination and proteasomal degradation. Bridges together TBK1 and NEMO during the innate response to viral infection leading to the activation of TBK1. Positively regulates LPS-mediated inflammatory innate immune response by catalyzing the 'Lys-11'-linked polyubiquitination of TAB1 to enhance its activation and subsequent NF-kappa-B and MAPK signaling. In a manner independent of its catalytic activity, inhibits WWP2, a SOX2-directed E3 ubiquitin ligase, and thus protects SOX2 from polyubiquitination and proteasomal degradation. Ubiquitinates the histone acetyltransferase protein complex component PHF20 and thereby triggers its degradation in the nucleus after its recruitment by the histone demethylase KDM6B, serving as a scaffold protein. Upon induction by TGF-beta, ubiquitinates the TFIID component TAF7 for proteasomal degradation. Induces ferroptosis by ubiquitinating SLC7A11, a critical protein for lipid reactive oxygen species (ROS) scavenging. This is Tripartite motif-containing protein 26 (Trim26) from Mus musculus (Mouse).